A 36-amino-acid polypeptide reads, in one-letter code: Photosystem I reaction center subunit VIII (36 aa).

The chain crosses the membrane as a helical span at residues 4-24 (FSLPSILVPLVGLVLPAIAMA).

The protein belongs to the PsaI family.

The protein localises to the plastid. The protein resides in the chloroplast thylakoid membrane. Its function is as follows. May help in the organization of the PsaL subunit. In Piper cenocladum (Ant piper), this protein is Photosystem I reaction center subunit VIII.